The sequence spans 313 residues: 2,3-dihydroxyphenylpropionate/2,3-dihydroxicinnamic acid 1,2-dioxygenase (313 aa).

The active-site Proton donor is the His-115. Residue His-179 is the Proton acceptor of the active site.

It belongs to the LigB/MhpB extradiol dioxygenase family. As to quaternary structure, homotetramer. Requires Fe(2+) as cofactor.

The catalysed reaction is 3-(2,3-dihydroxyphenyl)propanoate + O2 = (2Z,4E)-2-hydroxy-6-oxonona-2,4-dienedioate + H(+). It catalyses the reaction (2E)-3-(2,3-dihydroxyphenyl)prop-2-enoate + O2 = (2Z,4E,7E)-2-hydroxy-6-oxonona-2,4,7-trienedioate + H(+). The protein operates within aromatic compound metabolism; 3-phenylpropanoate degradation. Catalyzes the non-heme iron(II)-dependent oxidative cleavage of 2,3-dihydroxyphenylpropionic acid and 2,3-dihydroxicinnamic acid into 2-hydroxy-6-ketononadienedioate and 2-hydroxy-6-ketononatrienedioate, respectively. In Mycolicibacterium smegmatis (strain ATCC 700084 / mc(2)155) (Mycobacterium smegmatis), this protein is 2,3-dihydroxyphenylpropionate/2,3-dihydroxicinnamic acid 1,2-dioxygenase.